The sequence spans 2149 residues: Oxygen-regulated protein 1 (2149 aa).

Polar residues predominate over residues 1 to 20 (MSDTPSTGFSMIHPTSSEGQ). The segment at 1-25 (MSDTPSTGFSMIHPTSSEGQVPSPR) is disordered. The Doublecortin 1 domain maps to 36 to 118 (KRISFYKSGD…GRKVQPVDLD (83 aa)). The disordered stretch occupies residues 127–148 (WLSSRAVSTHAPPHSVAAPGMP). The Doublecortin 2 domain maps to 152–231 (RSLVVFRNGD…REPFKPGNYD (80 aa)). Disordered stretches follow at residues 351–373 (VSKT…RTES), 1435–1456 (MEEP…SSER), and 1583–1613 (VTSD…SGEL). Residues 1446–1456 (SVTNSVTSSER) are compositionally biased toward polar residues.

As to quaternary structure, interacts (via the doublecortin domains) with microtubules. Interacts with RP1L1. Interacts with MAK.

Its subcellular location is the cytoplasm. It is found in the cytoskeleton. The protein localises to the cilium axoneme. It localises to the cell projection. The protein resides in the cilium. Its subcellular location is the photoreceptor outer segment. In terms of biological role, microtubule-associated protein regulating the stability and length of the microtubule-based axoneme of photoreceptors. Required for the differentiation of photoreceptor cells, it plays a role in the organization of the outer segment of rod and cone photoreceptors ensuring the correct orientation and higher-order stacking of outer segment disks along the photoreceptor axoneme. The polypeptide is Oxygen-regulated protein 1 (RP1) (Saimiri boliviensis boliviensis (Bolivian squirrel monkey)).